Consider the following 72-residue polypeptide: Large ribosomal subunit protein bL31 (72 aa).

Residues Cys-16, Cys-18, Cys-37, and Cys-40 each coordinate Zn(2+).

This sequence belongs to the bacterial ribosomal protein bL31 family. Type A subfamily. As to quaternary structure, part of the 50S ribosomal subunit. Zn(2+) serves as cofactor.

Binds the 23S rRNA. In Idiomarina loihiensis (strain ATCC BAA-735 / DSM 15497 / L2-TR), this protein is Large ribosomal subunit protein bL31.